The primary structure comprises 98 residues: UPF0175 protein VNG_0066H (98 aa).

Belongs to the UPF0175 family.

The chain is UPF0175 protein VNG_0066H from Halobacterium salinarum (strain ATCC 700922 / JCM 11081 / NRC-1) (Halobacterium halobium).